Reading from the N-terminus, the 475-residue chain is Squamosa promoter-binding-like protein 12 (475 aa).

Residues 49 to 73 (NHGSTNSSGGTFTSSSELANGSSKS) are disordered. Low complexity predominate over residues 51–73 (GSTNSSGGTFTSSSELANGSSKS). The segment at 177–254 (SSYCQVEGCK…SDHNARRRKP (78 aa)) adopts an SBP-type zinc-finger fold. 8 residues coordinate Zn(2+): C180, C185, C202, H205, C221, C224, H228, and C240. Residues 237–253 (KKSCRRRLSDHNARRRK) carry the Bipartite nuclear localization signal motif. Residues 437-475 (GGGGFWQDGDDPPPLDHASQAQAFMHPGNGSSSGYGHLH) are disordered. Positions 465-475 (NGSSSGYGHLH) are enriched in polar residues.

As to expression, expressed in young panicles.

It is found in the nucleus. Its function is as follows. Trans-acting factor that binds specifically to the consensus nucleotide sequence 5'-TNCGTACAA-3'. May be involved in panicle development. The protein is Squamosa promoter-binding-like protein 12 (SPL12) of Oryza sativa subsp. japonica (Rice).